The chain runs to 177 residues: ATP synthase subunit delta (177 aa).

This sequence belongs to the ATPase delta chain family. F-type ATPases have 2 components, F(1) - the catalytic core - and F(0) - the membrane proton channel. F(1) has five subunits: alpha(3), beta(3), gamma(1), delta(1), epsilon(1). F(0) has three main subunits: a(1), b(2) and c(10-14). The alpha and beta chains form an alternating ring which encloses part of the gamma chain. F(1) is attached to F(0) by a central stalk formed by the gamma and epsilon chains, while a peripheral stalk is formed by the delta and b chains.

It is found in the cell inner membrane. Its function is as follows. F(1)F(0) ATP synthase produces ATP from ADP in the presence of a proton or sodium gradient. F-type ATPases consist of two structural domains, F(1) containing the extramembraneous catalytic core and F(0) containing the membrane proton channel, linked together by a central stalk and a peripheral stalk. During catalysis, ATP synthesis in the catalytic domain of F(1) is coupled via a rotary mechanism of the central stalk subunits to proton translocation. Functionally, this protein is part of the stalk that links CF(0) to CF(1). It either transmits conformational changes from CF(0) to CF(1) or is implicated in proton conduction. This is ATP synthase subunit delta from Shewanella frigidimarina (strain NCIMB 400).